Here is a 483-residue protein sequence, read N- to C-terminus: Docking protein 1 (483 aa).

Position 1 is an N-acetylmethionine (Met-1). One can recognise a PH domain in the interval 4–119 (AVMEGPLFLQ…WVQTLCQNAF (116 aa)). Phosphoserine is present on Ser-48. The IRS-type PTB domain maps to 151-259 (EGSQFWVTVQ…HRQKIQGKAG (109 aa)). 2 positions are modified to phosphoserine: Ser-269 and Ser-291. Positions 293–326 (PALYSEPLDSLRIPPGPSQDSLYSDPLDSTPARA) are disordered. Tyr-296, Tyr-337, Tyr-362, Tyr-377, Tyr-398, and Tyr-409 each carry phosphotyrosine. Residues 409–483 (YAVPPPRSTK…RTGAKSEGST (75 aa)) are disordered. A compositionally biased stretch (pro residues) spans 411 to 424 (VPPPRSTKPFPAPK). Ser-416 carries the phosphoserine modification. Residues 434-460 (GAATGSGSQGHSSDTALYSQVQKSGAS) show a composition bias toward polar residues. Tyr-451 is subject to Phosphotyrosine. Ser-462 bears the Phosphoserine mark.

The protein belongs to the DOK family. Type A subfamily. Interacts with RasGAP, INPP5D/SHIP1 and ABL1. Interacts directly with phosphorylated ITGB3. Interacts with SRMS (via the SH2 and SH3 domains). In terms of processing, constitutively tyrosine-phosphorylated. Phosphorylated by TEC. Phosphorylated by LYN. Phosphorylated on tyrosine residues by the insulin receptor kinase. Results in the negative regulation of the insulin signaling pathway. Phosphorylated on tyrosine residues by SRMS.

It is found in the cytoplasm. The protein resides in the nucleus. Functionally, DOK proteins are enzymatically inert adaptor or scaffolding proteins. They provide a docking platform for the assembly of multimolecular signaling complexes. DOK1 appears to be a negative regulator of the insulin signaling pathway. Modulates integrin activation by competing with talin for the same binding site on ITGB3. In Bos taurus (Bovine), this protein is Docking protein 1 (DOK1).